The following is a 275-amino-acid chain: Type III pantothenate kinase (275 aa).

9 to 16 (DIGNTRLK) serves as a coordination point for ATP. Substrate contacts are provided by residues Tyr-114 and 121 to 124 (GVDR). Residue Asp-123 is the Proton acceptor of the active site. Residue Thr-147 participates in ATP binding. Thr-209 provides a ligand contact to substrate.

This sequence belongs to the type III pantothenate kinase family. In terms of assembly, homodimer. The cofactor is NH4(+). K(+) is required as a cofactor.

The protein resides in the cytoplasm. The enzyme catalyses (R)-pantothenate + ATP = (R)-4'-phosphopantothenate + ADP + H(+). The protein operates within cofactor biosynthesis; coenzyme A biosynthesis; CoA from (R)-pantothenate: step 1/5. Catalyzes the phosphorylation of pantothenate (Pan), the first step in CoA biosynthesis. The polypeptide is Type III pantothenate kinase (Cupriavidus pinatubonensis (strain JMP 134 / LMG 1197) (Cupriavidus necator (strain JMP 134))).